Consider the following 334-residue polypeptide: Methionyl-tRNA formyltransferase (334 aa).

Residue 111–114 (SILP) participates in (6S)-5,6,7,8-tetrahydrofolate binding.

The protein belongs to the Fmt family.

The enzyme catalyses L-methionyl-tRNA(fMet) + (6R)-10-formyltetrahydrofolate = N-formyl-L-methionyl-tRNA(fMet) + (6S)-5,6,7,8-tetrahydrofolate + H(+). Attaches a formyl group to the free amino group of methionyl-tRNA(fMet). The formyl group appears to play a dual role in the initiator identity of N-formylmethionyl-tRNA by promoting its recognition by IF2 and preventing the misappropriation of this tRNA by the elongation apparatus. The polypeptide is Methionyl-tRNA formyltransferase (Trichormus variabilis (strain ATCC 29413 / PCC 7937) (Anabaena variabilis)).